Consider the following 118-residue polypeptide: Probable non-functional immunoglobulin lambda variable 2-33 (118 aa).

The N-terminal stretch at 1–19 (MAWALLLLTLLTQGTGSWA) is a signal peptide. Positions 20–44 (QSALTQPPFVSGAPGQSVTISCTGT) are framework-1. In terms of domain architecture, Ig-like spans 34–118 (GQSVTISCTG…CSLYSSSYTF (85 aa)). Cysteine 41 and cysteine 109 are disulfide-bonded. Residues 45-53 (SSDVGDYDH) are complementarity-determining-1. Residues 54–70 (VFWYQKRLSTTSRLLIY) form a framework-2 region. Residues 71–73 (NVN) form a complementarity-determining-2 region. Residues 74 to 109 (TRPSGISDLFSGSKSGNMASLTISGLKSEVEANYHC) are framework-3. Residues 110-118 (SLYSSSYTF) form a complementarity-determining-3 region.

Immunoglobulins are composed of two identical heavy chains and two identical light chains; disulfide-linked.

The protein localises to the secreted. It localises to the cell membrane. Its function is as follows. Probable non-functional open reading frame (ORF) of V region of the variable domain of immunoglobulin light chains. Non-functional ORF generally cannot participate in the synthesis of a productive immunoglobulin chain due to altered V-(D)-J or switch recombination and/or splicing site (at mRNA level) and/or conserved amino acid change (protein level). Immunoglobulins, also known as antibodies, are membrane-bound or secreted glycoproteins produced by B lymphocytes. In the recognition phase of humoral immunity, the membrane-bound immunoglobulins serve as receptors which, upon binding of a specific antigen, trigger the clonal expansion and differentiation of B lymphocytes into immunoglobulins-secreting plasma cells. Secreted immunoglobulins mediate the effector phase of humoral immunity, which results in the elimination of bound antigens. The antigen binding site is formed by the variable domain of one heavy chain, together with that of its associated light chain. Thus, each immunoglobulin has two antigen binding sites with remarkable affinity for a particular antigen. The variable domains are assembled by a process called V-(D)-J rearrangement and can then be subjected to somatic hypermutations which, after exposure to antigen and selection, allow affinity maturation for a particular antigen. The sequence is that of Probable non-functional immunoglobulin lambda variable 2-33 from Homo sapiens (Human).